Reading from the N-terminus, the 697-residue chain is UBA domain-containing protein 7 (697 aa).

The interval 1-94 (MDDLLDFNFY…STPKSSNYDP (94 aa)) is disordered. The span at 13 to 32 (STPSNQNNYSNNNSRTPSYS) shows a compositional bias: low complexity. Residues 62-77 (KKTDNKISLKELERQK) are compositionally biased toward basic and acidic residues. The span at 81–92 (PDSNSTPKSSNY) shows a compositional bias: polar residues. The UBA domain occupies 181–221 (KLSSNEMYEKLRDLGFSDDQSRLALENSGSLEDAIEYILEK). Residues 306-346 (PEILPKTPIPKRKPHKVPMNEKVSEDRITTNQSRSGNDESS) are disordered. A compositionally biased stretch (basic and acidic residues) spans 323–333 (PMNEKVSEDRI). The segment covering 334-345 (TTNQSRSGNDES) has biased composition (polar residues). The stretch at 412-445 (VEEQQSTGNELFRKGDFSQAIEEFTNSLSQLPAK) is one TPR repeat. The disordered stretch occupies residues 547–573 (ISSHSSESHSKRTTQQPKSTPNHTNIK). Polar residues predominate over residues 559-573 (TTQQPKSTPNHTNIK). The J domain maps to 633–696 (CRWQKVSLSE…AWELFKQQND (64 aa)).

This chain is UBA domain-containing protein 7 (ucp7), found in Schizosaccharomyces pombe (strain 972 / ATCC 24843) (Fission yeast).